Here is a 195-residue protein sequence, read N- to C-terminus: PRELI domain containing protein 3B (195 aa).

Residues 1 to 172 (MKIWTSEHVF…VIHKLNAEIE (172 aa)) form the PRELI/MSF1 domain. Residues S46 and S51 each carry the phosphoserine modification.

Belongs to the slowmo family.

This chain is PRELI domain containing protein 3B (Prelid3b), found in Mus musculus (Mouse).